Reading from the N-terminus, the 351-residue chain is MVLSIRSQIIIGVVSSIPLTSTILAIAYILMWFNGHMTLTLTLTTIITSCLTLLICSIFINPLIQKIKQFNIKTKQFANGNYASNDKTFNSPKEIYELNQSFNKMASEITQQMNQIKSEQQEKTELIQNLAHDLKTPLASIISYSEGLRDGIITKDHEIKESYDILIKQANRLSTLFDDMTHIITLNTGKTYPPELIQLDQLLVSILQPYEQRIKHENRTLEVNFCNEIDAFYQYRTPLERILTNLLDNALKFSNVGSRIDINISENEDQDTIDIAISDEGIGIIPELQERIFERTFRVENSRNTKTGGSGLGLYIANELAQQNNAKISVSSDIDVGTTMTVTLHKLDITS.

2 helical membrane-spanning segments follow: residues 9 to 29 (IIIG…IAYI) and 40 to 60 (TLTL…SIFI). Positions 61–114 (NPLIQKIKQFNIKTKQFANGNYASNDKTFNSPKEIYELNQSFNKMASEITQQMN) constitute an HAMP domain. Residues 129-348 (NLAHDLKTPL…TMTVTLHKLD (220 aa)) form the Histidine kinase domain. His132 bears the Phosphohistidine; by autocatalysis mark.

In terms of processing, autophosphorylated.

It localises to the cell membrane. It catalyses the reaction ATP + protein L-histidine = ADP + protein N-phospho-L-histidine.. Member of the two-component regulatory system SaeR/SaeS involved in the regulation of staphylococcal virulence factors in a strain-dependent fashion. Probably functions as a membrane-associated protein kinase that upon sensing the appropriate signal, autophosphorylates and in turn activates the cytosolic response regulator SaeR. SaeR/SaeS activates the expression of exoproteins involved in adhesion and invasion of host cells, including hemolysins (hla, hlb, hlgC), coa, DNase, spa and cell wall-associated proteins (emp, eap, fnbA, fnbB, efb). Represses the expression of type 5 capsular polysaccharide (cap operon). Also modulates the expression of several other genes. This chain is Histidine protein kinase SaeS (saeS), found in Staphylococcus aureus (strain Newman).